The chain runs to 82 residues: uncharacterized protein (82 aa).

This is an uncharacterized protein from Bacillus subtilis (strain 168).